Reading from the N-terminus, the 143-residue chain is uncharacterized protein (143 aa).

Residues 1-27 (MSDEIARLVADVFELAGLLRRSGEVVA) form the signal peptide.

This is an uncharacterized protein from Mycobacterium tuberculosis (strain CDC 1551 / Oshkosh).